Here is an 84-residue protein sequence, read N- to C-terminus: MSETNRIQQGRVISDKMDKSIVVAIERTVKHPIYGKFIKRTTKVHAHDEDNTCGLGDKVEIAECRPLSKTKSWTLVKVLEKAKI.

It belongs to the universal ribosomal protein uS17 family. In terms of assembly, part of the 30S ribosomal subunit.

Functionally, one of the primary rRNA binding proteins, it binds specifically to the 5'-end of 16S ribosomal RNA. This is Small ribosomal subunit protein uS17 from Vibrio atlanticus (strain LGP32) (Vibrio splendidus (strain Mel32)).